Here is a 2383-residue protein sequence, read N- to C-terminus: Highly reducing polyketide synthase SAT13 (2383 aa).

Positions 6–433 constitute a Ketosynthase family 3 (KS3) domain; sequence PVPLAIVGIA…GTNAHAVLER (428 aa). Active-site for beta-ketoacyl synthase activity residues include Cys180, His315, and His355. The malonyl-CoA:ACP transacylase (MAT) domain stretch occupies residues 536-828; the sequence is FIFTGQGAQW…IGPHSALAGP (293 aa). Catalysis depends on Ser626, which acts as the For malonyltransferase activity. The N-terminal hotdog fold stretch occupies residues 922–1062; it reads HDLLGLRMTE…GNIVVVFKTS (141 aa). The interval 922–1239 is dehydratase (DH) domain; the sequence is HDLLGLRMTE…GMELRSFVAR (318 aa). A PKS/mFAS DH domain is found at 922-1242; sequence HDLLGLRMTE…LRSFVARDSN (321 aa). The active-site Proton acceptor; for dehydratase activity is His954. The segment at 1087 to 1242 is C-terminal hotdog fold; the sequence is GKLTHAGQLY…LRSFVARDSN (156 aa). Residue Asp1152 is the Proton donor; for dehydratase activity of the active site. The segment at 1669 to 1977 is enoylreductase (ER) domain; sequence DGQNRLVFVE…KQGSMKKCVL (309 aa). Positions 2001–2184 are catalytic ketoreductase (KRc) domain; the sequence is ATYVVAGGLG…MSLNIGGIKD (184 aa). Residues 2287–2364 form the Carrier domain; sequence EISEFVARSI…DLAQKVVSRS (78 aa). Ser2324 is subject to O-(pantetheine 4'-phosphoryl)serine.

It participates in mycotoxin biosynthesis. Functionally, highly reducing polyketide synthase; part of the satratoxin SC2 cluster involved in the biosynthesis of satratoxins, trichothecene mycotoxins that are associated with human food poisonings. Satratoxins are suggested to be made by products of multiple gene clusters (SC1, SC2 and SC3) that encode 21 proteins in all, including polyketide synthases, acetyltransferases, and other enzymes expected to modify the trichothecene skeleton. SC1 encodes 10 proteins, SAT1 to SAT10. The largest are SAT8, which encodes a putative polyketide synthase (PKS) with a conventional non-reducing architecture, and SAT10, a putative protein containing four ankyrin repeats and thus may be involved in protein scaffolding. The putative short-chain reductase SAT3 may assist the PKS in some capacity. SAT6 contains a secretory lipase domain and acts probably as a trichothecene esterase. SAT5 encodes a putative acetyltransferase, and so, with SAT6, may affect endogenous protection from toxicity. The probable transcription factor SAT9 may regulate the expression of the SC1 cluster. SC2 encodes proteins SAT11 to SAT16, the largest of which encodes the putative reducing PKS SAT13. SAT11 is a cytochrome P450 monooxygenase, while SAT14 and SAT16 are probable acetyltransferases. The SC2 cluster may be regulated by the transcription factor SAT15. SC3 is a small cluster that encodes 5 proteins, SAT17 to SAT21. SAT21 is a putative MFS-type transporter which may have a role in exporting secondary metabolites. The four other proteins putatively encoded in SC3 include the taurine hydroxylase-like protein SAT17, the O-methyltransferase SAT18, the acetyltransferase SAT19, and the Cys6-type zinc finger SAT20, the latter being probably involved in regulation of SC3 expression. In Stachybotrys chartarum (strain CBS 109288 / IBT 7711) (Toxic black mold), this protein is Highly reducing polyketide synthase SAT13.